Reading from the N-terminus, the 303-residue chain is Ornithine carbamoyltransferase (303 aa).

Carbamoyl phosphate-binding positions include 52-55, Q79, R103, and 130-133; these read STRT and HPCQ. L-ornithine-binding positions include N161, D222, and 226 to 227; that span reads SM. Carbamoyl phosphate contacts are provided by residues 262–263 and R290; that span reads CL.

The protein belongs to the aspartate/ornithine carbamoyltransferase superfamily. OTCase family.

It is found in the cytoplasm. It carries out the reaction carbamoyl phosphate + L-ornithine = L-citrulline + phosphate + H(+). The protein operates within amino-acid biosynthesis; L-arginine biosynthesis; L-arginine from L-ornithine and carbamoyl phosphate: step 1/3. Functionally, reversibly catalyzes the transfer of the carbamoyl group from carbamoyl phosphate (CP) to the N(epsilon) atom of ornithine (ORN) to produce L-citrulline. This chain is Ornithine carbamoyltransferase, found in Geobacter metallireducens (strain ATCC 53774 / DSM 7210 / GS-15).